The primary structure comprises 1012 residues: Beta-alanine-activating enzyme (1012 aa).

Residues 177-185 (TTGTTGKPK), aspartate 411, arginine 426, and lysine 516 each bind ATP.

Belongs to the ATP-dependent AMP-binding enzyme family.

Its function is as follows. Covalently binds beta-alanine in an ATP-dependent manner to form a thioester bond with its phosphopantetheine group and transfers it to an, as yet, unknown acceptor. May be required for a post-translational protein modification or for post-transcriptional modification of an RNA. This chain is Beta-alanine-activating enzyme, found in Drosophila melanogaster (Fruit fly).